The sequence spans 73 residues: Translation initiation factor IF-1 (73 aa).

One can recognise an S1-like domain in the interval Met1–Lys73.

Belongs to the IF-1 family. Component of the 30S ribosomal translation pre-initiation complex which assembles on the 30S ribosome in the order IF-2 and IF-3, IF-1 and N-formylmethionyl-tRNA(fMet); mRNA recruitment can occur at any time during PIC assembly.

It is found in the cytoplasm. One of the essential components for the initiation of protein synthesis. Stabilizes the binding of IF-2 and IF-3 on the 30S subunit to which N-formylmethionyl-tRNA(fMet) subsequently binds. Helps modulate mRNA selection, yielding the 30S pre-initiation complex (PIC). Upon addition of the 50S ribosomal subunit IF-1, IF-2 and IF-3 are released leaving the mature 70S translation initiation complex. This is Translation initiation factor IF-1 from Kineococcus radiotolerans (strain ATCC BAA-149 / DSM 14245 / SRS30216).